Reading from the N-terminus, the 470-residue chain is Putative bifunctional phosphatase/peptidyl-prolyl cis-trans isomerase (470 aa).

Asp-22 functions as the Nucleophile in the catalytic mechanism. Residues Asp-22, Asp-24, and Asp-221 each contribute to the Mg(2+) site. In terms of domain architecture, PPIase cyclophilin-type spans 286 to 468 (TGPKVTIKTN…EDVIIETIEV (183 aa)).

The protein in the C-terminal section; belongs to the cyclophilin-type PPIase family. PPIL1 subfamily. Requires Mg(2+) as cofactor.

It catalyses the reaction [protein]-peptidylproline (omega=180) = [protein]-peptidylproline (omega=0). In terms of biological role, PPIases accelerate the folding of proteins. It catalyzes the cis-trans isomerization of proline imidic peptide bonds in oligopeptides. The sequence is that of Putative bifunctional phosphatase/peptidyl-prolyl cis-trans isomerase from Streptococcus pyogenes serotype M6 (strain ATCC BAA-946 / MGAS10394).